Reading from the N-terminus, the 371-residue chain is MSQTEIVKKPKHKRFKRPDKSRFVQQTLPAWQFIFTPWTVLPLLFLLGIVFAPLGAGMFVASRRVKELRIDYTDCMNIGDEFKQVPSTNIEFQYKNVKNVTAMWKSSGDVCTLRFQIPEEMTSPVFAFYRLKNFYQNHRRYTVSADMFQLLGEARTVAQLKSYGFCKPLEANEEGKPYYPCGIIANSLFNDSYSSLLRYESFDSSNSLGLYNMTTNGTAWPEDRERYKKTKYNASQIVPPPNWAKMFPNGYTDDNIPDVSTWDAFQIWMRAAALPTFSKLALRNVTTALQPGIYEMNITYNFPVTEYKGTKTIMFSTTSVIGGKNYFLGILYFVIGGLCAASGVILSIACLIKPRRVGDPRYLSWNRGKSS.

Over 1–39 the chain is Cytoplasmic; sequence MSQTEIVKKPKHKRFKRPDKSRFVQQTLPAWQFIFTPWT. The chain crosses the membrane as a helical span at residues 40 to 60; the sequence is VLPLLFLLGIVFAPLGAGMFV. Residues 61-325 lie on the Extracellular side of the membrane; the sequence is ASRRVKELRI…STTSVIGGKN (265 aa). 2 cysteine pairs are disulfide-bonded: cysteine 75/cysteine 111 and cysteine 166/cysteine 181. An N-linked (GlcNAc...) asparagine glycan is attached at asparagine 99. Asparagine 190, asparagine 212, asparagine 216, asparagine 233, asparagine 284, and asparagine 297 each carry an N-linked (GlcNAc...) asparagine glycan. Residues 326–346 form a helical membrane-spanning segment; it reads YFLGILYFVIGGLCAASGVIL. Residues 347–371 lie on the Cytoplasmic side of the membrane; sequence SIACLIKPRRVGDPRYLSWNRGKSS.

Belongs to the CDC50/LEM3 family.

The protein localises to the endoplasmic reticulum membrane. Functionally, accessory component of a P4-ATPase flippase complex which catalyzes the hydrolysis of ATP coupled to the transport of aminophospholipids from the lumenal to the cytosolic leaflet of membranes and ensures the maintenance of asymmetric distribution of phospholipids. The chain is Phospholipid-transporting ATPase accessory subunit ivn1 (ivn1) from Schizosaccharomyces pombe (strain 972 / ATCC 24843) (Fission yeast).